A 207-amino-acid polypeptide reads, in one-letter code: Metalloproteinase inhibitor 1 (207 aa).

The N-terminal stretch at 1 to 23 (MAPLAALASSMLLLLWLVAPSRA) is a signal peptide. Cys24 contacts Zn(2+). An involved in metalloproteinase-binding region spans residues 24–27 (CTCV). 6 disulfide bridges follow: Cys24-Cys93, Cys26-Cys122, Cys36-Cys147, Cys150-Cys197, Cys155-Cys160, and Cys168-Cys189. The NTR domain occupies 24-147 (CTCVPPHPQT…GFTKTYAAGC (124 aa)). Asn53 carries N-linked (GlcNAc...) asparagine glycosylation. The tract at residues 90 to 91 (ES) is involved in metalloproteinase-binding. Asn101 is a glycosylation site (N-linked (GlcNAc...) asparagine). Phosphoserine is present on Ser178.

Belongs to the protease inhibitor I35 (TIMP) family. Interacts with MMP1, MMP3, MMP10 and MMP13, but has only very low affinity for MMP14. Interacts with CD63; identified in a complex with CD63 and ITGB1. Post-translationally, the activity of TIMP1 is dependent on the presence of disulfide bonds. N-glycosylated.

It is found in the secreted. In terms of biological role, metalloproteinase inhibitor that functions by forming one to one complexes with target metalloproteinases, such as collagenases, and irreversibly inactivates them by binding to their catalytic zinc cofactor. Acts on MMP1, MMP2, MMP3, MMP7, MMP8, MMP9, MMP10, MMP11, MMP12, MMP13 and MMP16. Does not act on MMP14. Also functions as a growth factor that regulates cell differentiation, migration and cell death and activates cellular signaling cascades via CD63 and ITGB1. Plays a role in integrin signaling. In Oryctolagus cuniculus (Rabbit), this protein is Metalloproteinase inhibitor 1 (TIMP1).